The sequence spans 264 residues: Phosphonoacetaldehyde hydrolase (264 aa).

Catalysis depends on Asp9, which acts as the Nucleophile. Residues Asp9 and Ala11 each coordinate Mg(2+). Residue Lys50 is the Schiff-base intermediate with substrate of the active site. Asp183 contributes to the Mg(2+) binding site.

This sequence belongs to the HAD-like hydrolase superfamily. PhnX family. In terms of assembly, homodimer. Requires Mg(2+) as cofactor.

The catalysed reaction is phosphonoacetaldehyde + H2O = acetaldehyde + phosphate + H(+). Its function is as follows. Involved in phosphonate degradation. In Bacillus cereus (strain AH820), this protein is Phosphonoacetaldehyde hydrolase.